Reading from the N-terminus, the 247-residue chain is NADH-ubiquinone oxidoreductase chain 6 (247 aa).

5 consecutive transmembrane segments (helical) span residues 18-38 (TMILSVLSSPALVSGLMVVRA), 44-64 (SVLFPILVFCDTSGLLILLGL), 70-90 (ISPVVHIGAIAVSFLFVVMMF), 104-124 (YLPVSGIIGLIFWWEMFFILD), and 168-188 (VWFLVSSLILLVAMIGAIVLT).

The protein belongs to the complex I subunit 6 family.

The protein resides in the mitochondrion membrane. The catalysed reaction is a ubiquinone + NADH + 5 H(+)(in) = a ubiquinol + NAD(+) + 4 H(+)(out). Functionally, core subunit of the mitochondrial membrane respiratory chain NADH dehydrogenase (Complex I) that is believed to belong to the minimal assembly required for catalysis. Complex I functions in the transfer of electrons from NADH to the respiratory chain. The immediate electron acceptor for the enzyme is believed to be ubiquinone. The sequence is that of NADH-ubiquinone oxidoreductase chain 6 (ND6) from Triticum aestivum (Wheat).